The following is a 139-amino-acid chain: MLPAAMKSLGLALLALLLCPSPAHGLWCQDCTLANSSHCAPKQCQPTDTVCASVRITDPSSSRKDHSVNKMCASSCDFVKRHFFSDYLMGFINSGILKVDVDCCEKDLCNGASVAGRSPWALAGGLLLSLGPALLWAGP.

Positions 1-25 are cleaved as a signal peptide; it reads MLPAAMKSLGLALLALLLCPSPAHG. In terms of domain architecture, UPAR/Ly6 spans 26–113; the sequence is LWCQDCTLAN…CEKDLCNGAS (88 aa). Cystine bridges form between Cys-28-Cys-51, Cys-31-Cys-39, Cys-44-Cys-72, Cys-76-Cys-103, and Cys-104-Cys-109. Asn-35 carries an N-linked (GlcNAc...) asparagine glycan. A lipid anchor (GPI-anchor amidated asparagine) is attached at Asn-110. A propeptide spans 111-139 (removed in mature form); sequence GASVAGRSPWALAGGLLLSLGPALLWAGP.

In terms of assembly, interacts with CHRNA4 and CHRNA7. In terms of tissue distribution, strongly expressed in brain, also found in lower levels in eye and reproductive tissues.

It is found in the cell membrane. Believed to act as modulator of nicotinic acetylcholine receptors (nAChRs) activity. In vitro inhibits alpha-3:beta-4-containing nAChRs maximum response. In vitro inhibits alpha-3:beta-4-containing nAChRs maximum response. May play a role in the intracellular trafficking of alpha-7-containing nAChRs and may inhibit their expression at the cell surface. Seems to inhibit alpha-7/CHRNA7 signaling in hippocampal neurons. The protein is Lymphocyte antigen 6H (Ly6h) of Mus musculus (Mouse).